We begin with the raw amino-acid sequence, 227 residues long: Thymidine kinase (227 aa).

Residues 15–22 and 87–90 each bind ATP; these read GSMFSGKT and DEAQ. The Proton acceptor role is filled by glutamate 88. Cysteine 144, cysteine 147, cysteine 176, and cysteine 179 together coordinate Zn(2+). The interval 198–227 is disordered; it reads RAVATDDADASTNEADPEAADAASADGTAA. Over residues 217-227 the composition is skewed to low complexity; the sequence is ADAASADGTAA.

Belongs to the thymidine kinase family. Homotetramer.

The protein resides in the cytoplasm. It catalyses the reaction thymidine + ATP = dTMP + ADP + H(+). This chain is Thymidine kinase, found in Salinibacter ruber (strain DSM 13855 / M31).